The following is a 467-amino-acid chain: DEAD-box ATP-dependent RNA helicase CshA (467 aa).

Positions 2 to 30 match the Q motif motif; sequence TTFQELGLSQEVMKAIERMGFEETTPIQA. One can recognise a Helicase ATP-binding domain in the interval 33 to 203; the sequence is IPLSLQNKDV…ERFMNEPELV (171 aa). 46–53 provides a ligand contact to ATP; it reads AQTGTGKT. Positions 151–154 match the DEAD box motif; sequence DEAD. A Helicase C-terminal domain is found at 214–374; that stretch reads NIQQYYLEVH…RMKPPTLDEA (161 aa). A disordered region spans residues 428-467; it reads TTPVQLTEEPPLAVKREKKRGGRPDGSARSRTKKRRITAH. The segment covering 457-467 has biased composition (basic residues); sequence SRTKKRRITAH.

Belongs to the DEAD box helicase family. CshA subfamily. As to quaternary structure, oligomerizes, may be a member of the RNA degradosome.

It localises to the cytoplasm. The enzyme catalyses ATP + H2O = ADP + phosphate + H(+). In terms of biological role, DEAD-box RNA helicase possibly involved in RNA degradation. Unwinds dsRNA in both 5'- and 3'-directions, has RNA-dependent ATPase activity. The polypeptide is DEAD-box ATP-dependent RNA helicase CshA (Geobacillus kaustophilus (strain HTA426)).